Here is a 366-residue protein sequence, read N- to C-terminus: MPLHHLMIGTWTPPGAIFTVQFDDEKLTCKLIKRTEIPQDEPISWMTFDHERKNIYGAAMKKWSSFAVKSPTEIVHEASHPIGGHPRANDADTNTRAIFLLAAKQPPYAVYANPFYKFAGYGNVFSVSETGKLEKNVQNYEYQENTGIHGMVFDPTETYLYSADLTANKLWTHRKLASGEVELVGSVDAPDPGDHPRWVAMHPTGNYLYALMEAGNRICEYVIDPATHMPVYTHHSFPLIPPGIPDRDPETGKGLYRADVCALTFSGKYMFASSRANKFELQGYIAGFKLRDCGSIEKQLFLSPTPTSGGHSNAVSPCPWSDEWMAITDDQEGWLEIYRWKDEFLHRVARVRIPEPGFGMNAIWYD.

Residues His149, Arg197, Glu213, and Arg275 contribute to the active site.

It belongs to the cycloisomerase 2 family. In terms of assembly, homotetramer.

It catalyses the reaction 3-carboxy-2,5-dihydro-5-oxofuran-2-acetate = 3-carboxy-cis,cis-muconate. The protein operates within aromatic compound metabolism; beta-ketoadipate pathway; 3-carboxy-cis,cis-muconate from 3-carboxy-2,5-dihydro-5-oxofuran-2-acetate: step 1/1. Functionally, catalyzes a syn cycloisomerization. Also possesses mle activity. This is Carboxy-cis,cis-muconate cyclase from Neurospora crassa (strain ATCC 24698 / 74-OR23-1A / CBS 708.71 / DSM 1257 / FGSC 987).